Here is a 187-residue protein sequence, read N- to C-terminus: Elongation factor P (187 aa).

The protein belongs to the elongation factor P family.

It is found in the cytoplasm. The protein operates within protein biosynthesis; polypeptide chain elongation. Involved in peptide bond synthesis. Stimulates efficient translation and peptide-bond synthesis on native or reconstituted 70S ribosomes in vitro. Probably functions indirectly by altering the affinity of the ribosome for aminoacyl-tRNA, thus increasing their reactivity as acceptors for peptidyl transferase. This Synechocystis sp. (strain ATCC 27184 / PCC 6803 / Kazusa) protein is Elongation factor P (efp).